The primary structure comprises 343 residues: 4-hydroxyproline 2-epimerase 1 (343 aa).

Residue Ser-90 is the Proton acceptor of the active site. Substrate contacts are provided by residues 91 to 92 (GS), Asp-251, and 256 to 257 (GT).

Belongs to the proline racemase family.

The enzyme catalyses trans-4-hydroxy-L-proline = cis-4-hydroxy-D-proline. Functionally, catalyzes the epimerization of trans-4-hydroxy-L-proline (t4LHyp) to cis-4-hydroxy-D-proline (c4DHyp) in vitro, albeit with low efficiency. The physiological substrate may be different. Displays no proline racemase activity. This chain is 4-hydroxyproline 2-epimerase 1, found in Brucella anthropi (strain ATCC 49188 / DSM 6882 / CCUG 24695 / JCM 21032 / LMG 3331 / NBRC 15819 / NCTC 12168 / Alc 37) (Ochrobactrum anthropi).